Consider the following 397-residue polypeptide: Elongation factor Tu (397 aa).

The tr-type G domain maps to 10-206; that stretch reads KPHVNIGTIG…AVDSYIPTPE (197 aa). The tract at residues 19 to 26 is G1; it reads GHVDHGKT. 19–26 lines the GTP pocket; sequence GHVDHGKT. Residue Thr26 participates in Mg(2+) binding. The tract at residues 60 to 64 is G2; sequence GITIN. The tract at residues 81–84 is G3; sequence DCPG. GTP-binding positions include 81 to 85 and 136 to 139; these read DCPGH and NKAD. The interval 136–139 is G4; sequence NKAD. A G5 region spans residues 174-176; it reads SAL.

The protein belongs to the TRAFAC class translation factor GTPase superfamily. Classic translation factor GTPase family. EF-Tu/EF-1A subfamily. Monomer.

It localises to the cytoplasm. It catalyses the reaction GTP + H2O = GDP + phosphate + H(+). In terms of biological role, GTP hydrolase that promotes the GTP-dependent binding of aminoacyl-tRNA to the A-site of ribosomes during protein biosynthesis. The polypeptide is Elongation factor Tu (Clostridium beijerinckii (strain ATCC 51743 / NCIMB 8052) (Clostridium acetobutylicum)).